Reading from the N-terminus, the 353-residue chain is Photosystem II protein D1 (353 aa).

Residue Thr-2 is modified to N-acetylthreonine. Thr-2 is subject to Phosphothreonine. A run of 3 helical transmembrane segments spans residues 29–46 (YIGWFGVLMIPLLLTATS), 118–133 (HFLLGVCCYMGREWEL), and 142–156 (WIAVAYSAPVAAATA). His-118 provides a ligand contact to chlorophyll a. Position 126 (Tyr-126) interacts with pheophytin a. The [CaMn4O5] cluster site is built by Asp-170 and Glu-189. Residues 197–218 (FHMLGVAGVFGGSLFSAMHGSL) form a helical membrane-spanning segment. Chlorophyll a is bound at residue His-198. A quinone contacts are provided by residues His-215 and 264 to 265 (SF). His-215 serves as a coordination point for Fe cation. His-272 contributes to the Fe cation binding site. The helical transmembrane segment at 274-288 (FLAAWPVIGIWFTAL) threads the bilayer. [CaMn4O5] cluster-binding residues include His-332, Glu-333, Asp-342, and Ala-344. The propeptide occupies 345 to 353 (SVEAPSVNG).

Belongs to the reaction center PufL/M/PsbA/D family. PSII is composed of 1 copy each of membrane proteins PsbA, PsbB, PsbC, PsbD, PsbE, PsbF, PsbH, PsbI, PsbJ, PsbK, PsbL, PsbM, PsbT, PsbX, PsbY, PsbZ, Psb30/Ycf12, at least 3 peripheral proteins of the oxygen-evolving complex and a large number of cofactors. It forms dimeric complexes. The D1/D2 heterodimer binds P680, chlorophylls that are the primary electron donor of PSII, and subsequent electron acceptors. It shares a non-heme iron and each subunit binds pheophytin, quinone, additional chlorophylls, carotenoids and lipids. D1 provides most of the ligands for the Mn4-Ca-O5 cluster of the oxygen-evolving complex (OEC). There is also a Cl(-1) ion associated with D1 and D2, which is required for oxygen evolution. The PSII complex binds additional chlorophylls, carotenoids and specific lipids. serves as cofactor. In terms of processing, tyr-161 forms a radical intermediate that is referred to as redox-active TyrZ, YZ or Y-Z. C-terminally processed by CTPA; processing is essential to allow assembly of the oxygen-evolving complex and thus photosynthetic growth.

The protein resides in the plastid. It localises to the chloroplast thylakoid membrane. It carries out the reaction 2 a plastoquinone + 4 hnu + 2 H2O = 2 a plastoquinol + O2. Functionally, photosystem II (PSII) is a light-driven water:plastoquinone oxidoreductase that uses light energy to abstract electrons from H(2)O, generating O(2) and a proton gradient subsequently used for ATP formation. It consists of a core antenna complex that captures photons, and an electron transfer chain that converts photonic excitation into a charge separation. The D1/D2 (PsbA/PsbD) reaction center heterodimer binds P680, the primary electron donor of PSII as well as several subsequent electron acceptors. This chain is Photosystem II protein D1, found in Chlorokybus atmophyticus (Soil alga).